An 89-amino-acid polypeptide reads, in one-letter code: Cell division topological specificity factor (89 aa).

It belongs to the MinE family.

Functionally, prevents the cell division inhibition by proteins MinC and MinD at internal division sites while permitting inhibition at polar sites. This ensures cell division at the proper site by restricting the formation of a division septum at the midpoint of the long axis of the cell. The protein is Cell division topological specificity factor of Paracoccus denitrificans (strain Pd 1222).